The primary structure comprises 492 residues: Catalase-1/2 (492 aa).

Residues His65 and Asn138 contribute to the active site. Residue Tyr348 participates in heme binding.

Belongs to the catalase family. In terms of assembly, homotetramer. Heme is required as a cofactor.

The protein resides in the cytoplasm. Its subcellular location is the cytosol. It localises to the peroxisome matrix. The catalysed reaction is 2 H2O2 = O2 + 2 H2O. Functionally, catalyzes the degradation of hydrogen peroxide (H(2)O(2)) generated by peroxisomal oxidases to water and oxygen, thereby protecting cells from the toxic effects of hydrogen peroxide. The protein is Catalase-1/2 (CAT1) of Glycine max (Soybean).